Reading from the N-terminus, the 248-residue chain is Tryptophan synthase alpha chain (248 aa).

Catalysis depends on proton acceptor residues glutamate 36 and aspartate 47.

Belongs to the TrpA family. As to quaternary structure, tetramer of two alpha and two beta chains.

It carries out the reaction (1S,2R)-1-C-(indol-3-yl)glycerol 3-phosphate + L-serine = D-glyceraldehyde 3-phosphate + L-tryptophan + H2O. The protein operates within amino-acid biosynthesis; L-tryptophan biosynthesis; L-tryptophan from chorismate: step 5/5. The alpha subunit is responsible for the aldol cleavage of indoleglycerol phosphate to indole and glyceraldehyde 3-phosphate. The chain is Tryptophan synthase alpha chain from Pyrococcus furiosus (strain ATCC 43587 / DSM 3638 / JCM 8422 / Vc1).